The chain runs to 177 residues: KxDL motif-containing protein 1 (177 aa).

Residue Met-1 is modified to N-acetylmethionine. The interval 92-177 (ARQHPEAFSH…TDDEEETREE (86 aa)) is disordered. A compositionally biased stretch (polar residues) spans 119–145 (SITTTIATSEQSTGSCDTSPDTASPSF).

Belongs to the KXD1 family. In terms of assembly, component of the BLOC-one-related complex (BORC) which is composed of BLOC1S1, BLOC1S2, BORCS5, BORCS6, BORCS7, BORCS8, KXD1 and SNAPIN. Associates with the BLOC-1 complex. Interacts with BLOC1S1. Interacts with DTNBP1/BLOC1S7 (via coiled-coil domain).

The protein resides in the lysosome membrane. Its function is as follows. As part of the BORC complex may play a role in lysosomes movement and localization at the cell periphery. Associated with the cytosolic face of lysosomes, the BORC complex may recruit ARL8B and couple lysosomes to microtubule plus-end-directed kinesin motor. May also be involved in the biogenesis of lysosome-related organelles such as melanosomes. The sequence is that of KxDL motif-containing protein 1 (Kxd1) from Rattus norvegicus (Rat).